The following is a 360-amino-acid chain: Chorismate synthase (360 aa).

Residues Arg48 and Arg54 each coordinate NADP(+). FMN is bound by residues 125–127, 246–247, Gly286, 301–305, and Arg327; these read RSS, NA, and KPTSS.

This sequence belongs to the chorismate synthase family. As to quaternary structure, homotetramer. The cofactor is FMNH2.

The enzyme catalyses 5-O-(1-carboxyvinyl)-3-phosphoshikimate = chorismate + phosphate. It functions in the pathway metabolic intermediate biosynthesis; chorismate biosynthesis; chorismate from D-erythrose 4-phosphate and phosphoenolpyruvate: step 7/7. Functionally, catalyzes the anti-1,4-elimination of the C-3 phosphate and the C-6 proR hydrogen from 5-enolpyruvylshikimate-3-phosphate (EPSP) to yield chorismate, which is the branch point compound that serves as the starting substrate for the three terminal pathways of aromatic amino acid biosynthesis. This reaction introduces a second double bond into the aromatic ring system. The protein is Chorismate synthase of Actinobacillus succinogenes (strain ATCC 55618 / DSM 22257 / CCUG 43843 / 130Z).